The sequence spans 158 residues: SsrA-binding protein (158 aa).

Belongs to the SmpB family.

It is found in the cytoplasm. Functionally, required for rescue of stalled ribosomes mediated by trans-translation. Binds to transfer-messenger RNA (tmRNA), required for stable association of tmRNA with ribosomes. tmRNA and SmpB together mimic tRNA shape, replacing the anticodon stem-loop with SmpB. tmRNA is encoded by the ssrA gene; the 2 termini fold to resemble tRNA(Ala) and it encodes a 'tag peptide', a short internal open reading frame. During trans-translation Ala-aminoacylated tmRNA acts like a tRNA, entering the A-site of stalled ribosomes, displacing the stalled mRNA. The ribosome then switches to translate the ORF on the tmRNA; the nascent peptide is terminated with the 'tag peptide' encoded by the tmRNA and targeted for degradation. The ribosome is freed to recommence translation, which seems to be the essential function of trans-translation. This chain is SsrA-binding protein, found in Caldanaerobacter subterraneus subsp. tengcongensis (strain DSM 15242 / JCM 11007 / NBRC 100824 / MB4) (Thermoanaerobacter tengcongensis).